A 3343-amino-acid polypeptide reads, in one-letter code: Breast cancer type 2 susceptibility protein homolog (3343 aa).

Residues 1–40 form an interaction with PALB2 region; it reads MTVEYKRRPTFWEIFKARCSTADLGPISLNWFEELFSEAP. Residues 40–60 are disordered; sequence PPYNTEHPEESEYKPQGHEPQ. Positions 45–56 are enriched in basic and acidic residues; that stretch reads EHPEESEYKPQG. Phosphoserine is present on Ser70. The segment at 348-381 is disordered; that stretch reads IEPRDSEPLDPSVTNQKPLYSQSGDISSEAGQCS. Polar residues predominate over residues 359-381; sequence SVTNQKPLYSQSGDISSEAGQCS. A phosphoserine mark is found at Ser475 and Ser736. An interaction with NPM1 region spans residues 622–982; that stretch reads PDSSIKRSNL…DKWSEFLDPL (361 aa). 8 BRCA2 repeats span residues 984 to 1018, 1197 to 1231, 1405 to 1439, 1503 to 1537, 1645 to 1669, 1828 to 1845, 1939 to 1973, and 2019 to 2053; these read NHKL…DIEE, KEME…DIEN, MKEF…QETE, KEPT…ETQY, CYTG…WLRE, FITT…IFTD, PSRT…EIDG, and SSFV…EFDL. Residues 985–2050 are interaction with RAD51; sequence HKLGGSFRTA…LHKVKGMLEE (1066 aa). Disordered stretches follow at residues 2059 to 2138, 2297 to 2356, and 2377 to 2407; these read TLQH…VLGT, PFCS…SDKS, and DSKN…PQFN. A Phosphoserine modification is found at Ser2063. Composition is skewed to polar residues over residues 2083 to 2094 and 2101 to 2125; these read PEYSVSSKLQKT and SPSN…QLSQ. Residues 2233 to 2300 are interaction with HSF2BP; that stretch reads RKRGGMAGVA…EPVTCGPFCS (68 aa). 2 stretches are compositionally biased toward polar residues: residues 2307-2320 and 2332-2342; these read TQSP…QGLQ and GKSSSNPTVSA. The tract at residues 2313–2475 is interaction with FANCD2; the sequence is TSPAQGLQSK…SPKQLYMYGV (163 aa). The segment covering 2344-2356 has biased composition (basic and acidic residues); the sequence is RSERTRHSVSDKS. An interaction with SEM1 region spans residues 2411-2762; the sequence is MSSLQNARDL…QRVYPLQWVE (352 aa). The Nuclear export signal; masked by interaction with SEM1 motif lies at 2612-2628; the sequence is AAKTLVLCVSDIISLST. A disordered region spans residues 3114-3163; the sequence is DSPKWSTPNKDPTREPYPASTCSASDLASGGQLPRSSPTDQQSYRSPLSC. The segment covering 3147 to 3163 has biased composition (polar residues); the sequence is PRSSPTDQQSYRSPLSC. Ser3222 is subject to Phosphoserine; by CDK1 and CDK2. 2 disordered regions span residues 3231–3255 and 3289–3343; these read PPRS…WSRA and VGGS…PDYS. Ser3250 carries the phosphoserine modification. Over residues 3295–3310 the composition is skewed to polar residues; sequence VFPSDSTRTEGPSAST. A compositionally biased stretch (basic and acidic residues) spans 3318–3334; it reads SKRESLRDCRDDSDGKL.

In terms of assembly, monomer and dimer. Interacts with RAD51; regulates RAD51 recruitment and function at sites of DNA repair. Interacts with SEM1, WDR16, USP11, DMC1, ROCK2 and NPM1. Interacts with both nonubiquitinated and monoubiquitinated FANCD2; this complex also includes XRCC3 and phosphorylated FANCG. Part of a BRCA complex containing BRCA1, BRCA2 and PALB2. Component of the homologous recombination repair (HR) complex composed of ERCC5/XPG, BRCA2, PALB2, DSS1 and RAD51. Within the complex, interacts with ERCC5/XPG and PALB2. Interacts directly with PALB2 which may serve as a scaffold for a HR complex containing PALB2, BRCA2, RAD51C, RAD51 and XRCC3. Interacts with BRCA1 only in the presence of PALB2 which serves as the bridging protein. Interacts with POLH; the interaction is direct. Interacts with the TREX-2 complex subunits PCID2 and SEM1. Interacts with HSF2BP and BRME1; the interaction with HSF2BP is direct and allows the formation of a ternary complex. The complex BRME1:HSF2BP:BRCA2 interacts with SPATA22, MEIOB and RAD51. In terms of processing, phosphorylated by ATM upon irradiation-induced DNA damage. Phosphorylation by CHEK1 and CHEK2 regulates interaction with RAD51. Phosphorylation at Ser-3222 by CDK1 and CDK2 is low in S phase when recombination is active, but increases as cells progress towards mitosis; this phosphorylation prevents homologous recombination-dependent repair during S phase and G2 by inhibiting RAD51 binding. Ubiquitinated in the absence of DNA damage; this does not lead to proteasomal degradation. In contrast, ubiquitination in response to DNA damage leads to proteasomal degradation. Highest expression in testis. Also expressed in spleen, skeletal muscle, thymus, mammary gland, heart, ovary, prostate, liver, lung, kidney and brain.

Its subcellular location is the nucleus. It is found in the cytoplasm. The protein localises to the cytoskeleton. It localises to the microtubule organizing center. The protein resides in the centrosome. Its function is as follows. Involved in double-strand break repair and/or homologous recombination. Binds RAD51 and potentiates recombinational DNA repair by promoting assembly of RAD51 onto single-stranded DNA (ssDNA). Acts by targeting RAD51 to ssDNA over double-stranded DNA, enabling RAD51 to displace replication protein-A (RPA) from ssDNA and stabilizing RAD51-ssDNA filaments by blocking ATP hydrolysis. Part of a PALB2-scaffolded HR complex containing RAD51C and which is thought to play a role in DNA repair by HR. May participate in S phase checkpoint activation. Binds selectively to ssDNA, and to ssDNA in tailed duplexes and replication fork structures. May play a role in the extension step after strand invasion at replication-dependent DNA double-strand breaks; together with PALB2 is involved in both POLH localization at collapsed replication forks and DNA polymerization activity. In concert with NPM1, regulates centrosome duplication. Interacts with the TREX-2 complex (transcription and export complex 2) subunits PCID2 and SEM1, and is required to prevent R-loop-associated DNA damage and thus transcription-associated genomic instability, independently of its known role in homologous recombination. The polypeptide is Breast cancer type 2 susceptibility protein homolog (Rattus norvegicus (Rat)).